A 228-amino-acid polypeptide reads, in one-letter code: 2,3-bisphosphoglycerate-dependent phosphoglycerate mutase (228 aa).

Substrate is bound by residues 8 to 15, 21 to 22, Arg60, 87 to 90, Lys98, 114 to 115, and 183 to 184; these read RHGQSEWN, TG, ERHY, RR, and GN. The active-site Tele-phosphohistidine intermediate is the His9. Catalysis depends on Glu87, which acts as the Proton donor/acceptor.

The protein belongs to the phosphoglycerate mutase family. BPG-dependent PGAM subfamily.

The enzyme catalyses (2R)-2-phosphoglycerate = (2R)-3-phosphoglycerate. The protein operates within carbohydrate degradation; glycolysis; pyruvate from D-glyceraldehyde 3-phosphate: step 3/5. In terms of biological role, catalyzes the interconversion of 2-phosphoglycerate and 3-phosphoglycerate. The protein is 2,3-bisphosphoglycerate-dependent phosphoglycerate mutase of Staphylococcus aureus (strain MRSA252).